Reading from the N-terminus, the 714-residue chain is Mitochondrial potassium channel ATP-binding subunit (714 aa).

A mitochondrion-targeting transit peptide spans methionine 1–phenylalanine 25. 4 helical membrane passes run leucine 127–isoleucine 147, isoleucine 178–leucine 198, leucine 278–leucine 298, and asparagine 365–glycine 385. The ABC transmembrane type-1 domain maps to leucine 132–arginine 419. Residues isoleucine 454–arginine 691 form the ABC transporter domain. Glycine 489 to threonine 496 is a binding site for ATP.

It belongs to the ABC transporter superfamily. ABCB family. Multidrug resistance exporter (TC 3.A.1.201) subfamily. As to quaternary structure, the mitochondrial potassium channel (mitoK(ATP)) is composed of 4 subunits of CCDC51/MITOK and 4 subunits of ABCB8/MITOSUR. Physically interacts with PAAT. Interacts with Neuropilin-1 (NRP1) in mitochondria. Strong expression is found in the heart, brain and testis. In the testis, expressed both in the somatic Sertoli cells and peritubular cells and in the germline (spermatogonia and pachytene spermatocytes). Also expressed in the lung, liver, intestine and kidney.

The protein localises to the mitochondrion inner membrane. Channel activity inhibited by ATP via ABCB8/MITOSUR subunit. In terms of biological role, ATP-binding subunit of the mitochondrial ATP-gated potassium channel (mitoK(ATP)). v. An increase in ATP intracellular levels closes the channel, inhibiting K(+) transport, whereas a decrease in ATP levels enhances K(+) uptake in the mitochondrial matrix. Plays a role in mitochondrial iron transport. Required for maintenance of normal cardiac function, possibly by influencing mitochondrial iron export and regulating the maturation of cytosolic iron sulfur cluster-containing enzymes. This Rattus norvegicus (Rat) protein is Mitochondrial potassium channel ATP-binding subunit.